The following is a 1129-amino-acid chain: Tyrosine-protein kinase JAK2 (1129 aa).

The region spanning 35-378 (PLLQVYLYYS…GYYRLTADAH (344 aa)) is the FERM domain. The residue at position 117 (tyrosine 117) is a Phosphotyrosine; by autocatalysis. The 82-residue stretch at 399 to 480 (HGPIFMDFAI…NLKDLLTCYQ (82 aa)) folds into the SH2; atypical domain. Protein kinase domains follow at residues 542–806 (LIFE…NSLF) and 846–1118 (LKFL…DLAQ). 852–860 (LGKGNFGSV) contacts ATP. A Phosphotyrosine; by autocatalysis modification is found at tyrosine 865. Lysine 879 contacts ATP. Residues tyrosine 963 and tyrosine 969 each carry the phosphotyrosine; by autocatalysis modification. The active-site Proton acceptor is the aspartate 973. Phosphotyrosine; by autocatalysis occurs at positions 1004 and 1005.

This sequence belongs to the protein kinase superfamily. Tyr protein kinase family. JAK subfamily. Autophosphorylated, leading to regulate its activity.

It is found in the endomembrane system. It localises to the nucleus. It catalyses the reaction L-tyrosyl-[protein] + ATP = O-phospho-L-tyrosyl-[protein] + ADP + H(+). With respect to regulation, regulated by autophosphorylation, can both activate or decrease activity. Heme regulates its activity by enhancing the phosphorylation on Tyr-1004 and Tyr-1005. Functionally, non-receptor tyrosine kinase involved in various processes such as cell growth, development, differentiation or histone modifications. Mediates essential signaling events in both innate and adaptive immunity. In the cytoplasm, plays a pivotal role in signal transduction via its association with cytokine receptors. Following ligand-binding to cell surface receptors, phosphorylates specific tyrosine residues on the cytoplasmic tails of the receptor, creating docking sites for STATs proteins. Subsequently, phosphorylates the STATs proteins once they are recruited to the receptor. Phosphorylated STATs then form homodimer or heterodimers and translocate to the nucleus to activate gene transcription. For example, cell stimulation with erythropoietin (EPO) during erythropoiesis leads to JAK2 autophosphorylation, activation, and its association with erythropoietin receptor (EPOR) that becomes phosphorylated in its cytoplasmic domain. Then, STAT5 (STAT5A or STAT5B) is recruited, phosphorylated and activated by JAK2. Once activated, dimerized STAT5 translocates into the nucleus and promotes the transcription of several essential genes involved in the modulation of erythropoiesis. Part of a signaling cascade that is activated by increased cellular retinol and that leads to the activation of STAT5 (STAT5A or STAT5B). In the nucleus, plays a key role in chromatin by specifically mediating phosphorylation of 'Tyr-41' of histone H3 (H3Y41ph), a specific tag that promotes exclusion of CBX5 (HP1 alpha) from chromatin. Up-regulates the potassium voltage-gated channel activity of KCNA3. The chain is Tyrosine-protein kinase JAK2 from Gallus gallus (Chicken).